Here is a 341-residue protein sequence, read N- to C-terminus: Ferrochelatase (341 aa).

Residues His196 and Glu277 each contribute to the Fe cation site.

This sequence belongs to the ferrochelatase family.

It localises to the cytoplasm. The catalysed reaction is heme b + 2 H(+) = protoporphyrin IX + Fe(2+). Its pathway is porphyrin-containing compound metabolism; protoheme biosynthesis; protoheme from protoporphyrin-IX: step 1/1. In terms of biological role, catalyzes the ferrous insertion into protoporphyrin IX. The polypeptide is Ferrochelatase (Synechococcus sp. (strain JA-3-3Ab) (Cyanobacteria bacterium Yellowstone A-Prime)).